The following is a 229-amino-acid chain: Cytochrome c oxidase subunit 2 (229 aa).

The Mitochondrial intermembrane portion of the chain corresponds to 1 to 26 (MSTWANLGLQDSASPLMEQLIFFHDH). A helical transmembrane segment spans residues 27-48 (ALLILVMITVLVGYLMFMLFFN). Over 49-62 (SYVNRFLLHGQLIE) the chain is Mitochondrial matrix. A helical transmembrane segment spans residues 63–82 (MIWTILPAIILLFIAMPSLR). Over 83–229 (LLYLLDEINE…IKWISNSVNS (147 aa)) the chain is Mitochondrial intermembrane. The Cu cation site is built by His161, Cys196, Glu198, Cys200, His204, and Met207. Glu198 is a Mg(2+) binding site.

It belongs to the cytochrome c oxidase subunit 2 family. As to quaternary structure, component of the cytochrome c oxidase (complex IV, CIV), a multisubunit enzyme composed of a catalytic core of 3 subunits and several supernumerary subunits. The complex exists as a monomer or a dimer and forms supercomplexes (SCs) in the inner mitochondrial membrane with ubiquinol-cytochrome c oxidoreductase (cytochrome b-c1 complex, complex III, CIII). Cu cation is required as a cofactor.

The protein resides in the mitochondrion inner membrane. The enzyme catalyses 4 Fe(II)-[cytochrome c] + O2 + 8 H(+)(in) = 4 Fe(III)-[cytochrome c] + 2 H2O + 4 H(+)(out). In terms of biological role, component of the cytochrome c oxidase, the last enzyme in the mitochondrial electron transport chain which drives oxidative phosphorylation. The respiratory chain contains 3 multisubunit complexes succinate dehydrogenase (complex II, CII), ubiquinol-cytochrome c oxidoreductase (cytochrome b-c1 complex, complex III, CIII) and cytochrome c oxidase (complex IV, CIV), that cooperate to transfer electrons derived from NADH and succinate to molecular oxygen, creating an electrochemical gradient over the inner membrane that drives transmembrane transport and the ATP synthase. Cytochrome c oxidase is the component of the respiratory chain that catalyzes the reduction of oxygen to water. Electrons originating from reduced cytochrome c in the intermembrane space (IMS) are transferred via the dinuclear copper A center (CU(A)) of subunit 2 and heme A of subunit 1 to the active site in subunit 1, a binuclear center (BNC) formed by heme A3 and copper B (CU(B)). The BNC reduces molecular oxygen to 2 water molecules using 4 electrons from cytochrome c in the IMS and 4 protons from the mitochondrial matrix. The chain is Cytochrome c oxidase subunit 2 (mt:CoII) from Drosophila narragansett (Fruit fly).